The chain runs to 494 residues: Guanosine-5'-triphosphate,3'-diphosphate pyrophosphatase (494 aa).

It belongs to the GppA/Ppx family. GppA subfamily.

The catalysed reaction is guanosine 3'-diphosphate 5'-triphosphate + H2O = guanosine 3',5'-bis(diphosphate) + phosphate + H(+). It participates in purine metabolism; ppGpp biosynthesis; ppGpp from GTP: step 2/2. In terms of biological role, catalyzes the conversion of pppGpp to ppGpp. Guanosine pentaphosphate (pppGpp) is a cytoplasmic signaling molecule which together with ppGpp controls the 'stringent response', an adaptive process that allows bacteria to respond to amino acid starvation, resulting in the coordinated regulation of numerous cellular activities. The chain is Guanosine-5'-triphosphate,3'-diphosphate pyrophosphatase from Escherichia coli O157:H7.